A 65-amino-acid polypeptide reads, in one-letter code: Large ribosomal subunit protein bL35 (65 aa).

It belongs to the bacterial ribosomal protein bL35 family.

The sequence is that of Large ribosomal subunit protein bL35 from Magnetococcus marinus (strain ATCC BAA-1437 / JCM 17883 / MC-1).